The sequence spans 365 residues: Spermine synthase (365 aa).

Alanine 2 is modified (N-acetylalanine). Serine 57 is subject to Phosphoserine. Residues 121-361 form the PABS domain; sequence RYWPTADGRL…ELWVFYTVWK (241 aa). Position 147 (glutamine 147) interacts with S-adenosyl 3-(methylsulfanyl)propylamine. Tyrosine 176 and aspartate 200 together coordinate spermidine. S-adenosyl 3-(methylsulfanyl)propylamine contacts are provided by residues glutamate 219 and 254 to 255; that span reads DC. Aspartate 275 functions as the Proton acceptor in the catalytic mechanism. Residues tyrosine 350 and glutamate 352 each coordinate spermidine.

Belongs to the spermidine/spermine synthase family. In terms of assembly, homodimer. Dimerization is mediated through the N-terminal domain and seems to be required for activity as deletion of the N-terminal domain causes complete loss of activity.

It catalyses the reaction S-adenosyl 3-(methylsulfanyl)propylamine + spermidine = spermine + S-methyl-5'-thioadenosine + H(+). It functions in the pathway amine and polyamine biosynthesis; spermine biosynthesis; spermine from spermidine: step 1/1. In terms of biological role, catalyzes the production of spermine from spermidine and decarboxylated S-adenosylmethionine (dcSAM). This Bos taurus (Bovine) protein is Spermine synthase (SMS).